The chain runs to 89 residues: Small ribosomal subunit protein uS15 (89 aa).

The protein belongs to the universal ribosomal protein uS15 family. As to quaternary structure, part of the 30S ribosomal subunit. Forms a bridge to the 50S subunit in the 70S ribosome, contacting the 23S rRNA.

In terms of biological role, one of the primary rRNA binding proteins, it binds directly to 16S rRNA where it helps nucleate assembly of the platform of the 30S subunit by binding and bridging several RNA helices of the 16S rRNA. Functionally, forms an intersubunit bridge (bridge B4) with the 23S rRNA of the 50S subunit in the ribosome. This Lacticaseibacillus casei (strain BL23) (Lactobacillus casei) protein is Small ribosomal subunit protein uS15.